The chain runs to 449 residues: Lysine-sensitive aspartokinase 3 (449 aa).

The segment at 2–245 (SEIVVSKFGG…AAKRIDEIAF (244 aa)) is aspartokinase. 8 to 11 (KFGG) contacts ATP. Substrate contacts are provided by residues Thr-45, Glu-119, and 198 to 201 (RGGS). Residues 221-222 (TD), Tyr-227, Arg-232, and 257-258 (KV) each bind ATP. Residues 246-449 (AEAAEMATFG…VQKLHSNLFE (204 aa)) form an interface region. The segment at 299 to 449 (FRALALRRNQ…VQKLHSNLFE (151 aa)) is required for homodimerization. Residues 313–394 (LHSLNMLHSR…GLALVALIGN (82 aa)) enclose the ACT domain. L-lysine is bound by residues Met-318, Ser-321, 324–325 (FL), 338–340 (SVD), and 345–346 (SE).

Belongs to the aspartokinase family. As to quaternary structure, homodimer. In the inactive form a homotetramer is formed.

It carries out the reaction L-aspartate + ATP = 4-phospho-L-aspartate + ADP. It participates in amino-acid biosynthesis; L-lysine biosynthesis via DAP pathway; (S)-tetrahydrodipicolinate from L-aspartate: step 1/4. With respect to regulation, synthesis and activity are sensitive to the allosteric inhibitor lysine, one of the end metabolites of the aspartic acid family branched pathway. The sequence is that of Lysine-sensitive aspartokinase 3 (lysC) from Escherichia coli (strain K12).